We begin with the raw amino-acid sequence, 627 residues long: 1-deoxy-D-xylulose-5-phosphate synthase (627 aa).

Residues His75 and 116–118 (AHS) contribute to the thiamine diphosphate site. Residue Asp147 participates in Mg(2+) binding. Thiamine diphosphate contacts are provided by residues 148–149 (GA), Asn177, Tyr284, and Glu366. Asn177 is a binding site for Mg(2+).

This sequence belongs to the transketolase family. DXPS subfamily. In terms of assembly, homodimer. Mg(2+) is required as a cofactor. The cofactor is thiamine diphosphate.

It carries out the reaction D-glyceraldehyde 3-phosphate + pyruvate + H(+) = 1-deoxy-D-xylulose 5-phosphate + CO2. It functions in the pathway metabolic intermediate biosynthesis; 1-deoxy-D-xylulose 5-phosphate biosynthesis; 1-deoxy-D-xylulose 5-phosphate from D-glyceraldehyde 3-phosphate and pyruvate: step 1/1. In terms of biological role, catalyzes the acyloin condensation reaction between C atoms 2 and 3 of pyruvate and glyceraldehyde 3-phosphate to yield 1-deoxy-D-xylulose-5-phosphate (DXP). This Bordetella petrii (strain ATCC BAA-461 / DSM 12804 / CCUG 43448) protein is 1-deoxy-D-xylulose-5-phosphate synthase.